Here is an 82-residue protein sequence, read N- to C-terminus: M-theraphotoxin-Gr1a (82 aa).

Positions 1–21 (MKTSVVFVIAGLALLSVVCYA) are cleaved as a signal peptide. The propeptide occupies 22–46 (SELKEQSSVNEVLSTIFHFEQPEER). 3 disulfides stabilise this stretch: C48–C63, C55–C69, and C62–C76. Residue F80 is modified to Phenylalanine amide.

It belongs to the neurotoxin 10 (Hwtx-1) family. 52 (MTx4) subfamily. In terms of tissue distribution, expressed by the venom gland.

Its subcellular location is the secreted. In terms of biological role, this cationic hydrophobic peptide acts on a lot of different channels and has an antimicrobial activity. It blocks mechanosensitive ion channels (also named stretch-activated channels or SACs), without having effect on whole-cell voltage-sensitive currents. It also affects acetylcholine receptors (nAChRs) through interactions with membrane lipids by prolonging the closing time without affecting channel conductance or opening activity. It shows high affinity for lipid bilayers. It acts by partitioning into the membrane and perturbing the interface between the channel and the lipid bilayer without necessarily being in physical contact with the channel. It inhibits atrial fibrillation as well as the membrane motor of outer hair cells at low doses. It also binds to the voltage sensor of voltage-gated potassium channels from the archaebacterium Aeropyrum pernix (KvAP) without affecting channel gating. It also shows a low inhibition on a large spectra of sodium channels (Nav1.1/SCN1A, Nav1.2/SCN2A, Nav1.3/SCN3A, Nav1.4/SCN4A, Nav1.5/SCN5A, Nav1.6/SCN8A, Nav1.7/SCN9A) (IC(50)=7.4-14 uM), and potassium channels Kv11.1/KCNH2 and Kv11.2/KCNH6 (IC(50)=11 uM for both). It exhibits antimicrobial activities against the Gram-positive bacteria B.subtilis (MIC=0.5 uM), S.aureus (MIC=2-4 uM), and S.epidermidis (MIC=4-8 uM), and Gram-negative bacteria S.typhimurium (MIC=32.64 uM), P.aeruginosa (MIC=8-16 uM), and E.coli (MIC=8-16 uM). The sequence is that of M-theraphotoxin-Gr1a from Grammostola rosea (Chilean rose tarantula).